The sequence spans 431 residues: Enolase (431 aa).

Gln-167 contributes to the (2R)-2-phosphoglycerate binding site. The active-site Proton donor is Glu-209. The Mg(2+) site is built by Asp-246, Glu-290, and Asp-317. Residues Lys-342, Arg-371, Ser-372, and Lys-393 each coordinate (2R)-2-phosphoglycerate. Lys-342 functions as the Proton acceptor in the catalytic mechanism.

Belongs to the enolase family. In terms of assembly, component of the RNA degradosome, a multiprotein complex involved in RNA processing and mRNA degradation. Mg(2+) serves as cofactor.

Its subcellular location is the cytoplasm. The protein resides in the secreted. It localises to the cell surface. The catalysed reaction is (2R)-2-phosphoglycerate = phosphoenolpyruvate + H2O. Its pathway is carbohydrate degradation; glycolysis; pyruvate from D-glyceraldehyde 3-phosphate: step 4/5. In terms of biological role, catalyzes the reversible conversion of 2-phosphoglycerate (2-PG) into phosphoenolpyruvate (PEP). It is essential for the degradation of carbohydrates via glycolysis. This is Enolase from Serratia proteamaculans (strain 568).